We begin with the raw amino-acid sequence, 600 residues long: NADH-quinone oxidoreductase subunit C/D (600 aa).

Residues 1 to 190 (MVNNMTDLTA…SPFELTKAKQ (190 aa)) form an NADH dehydrogenase I subunit C region. Positions 214–600 (DFMFLNLGPN…IDFVMSDVDR (387 aa)) are NADH dehydrogenase I subunit D.

The protein in the N-terminal section; belongs to the complex I 30 kDa subunit family. In the C-terminal section; belongs to the complex I 49 kDa subunit family. As to quaternary structure, NDH-1 is composed of 13 different subunits. Subunits NuoB, CD, E, F, and G constitute the peripheral sector of the complex.

The protein localises to the cell inner membrane. It carries out the reaction a quinone + NADH + 5 H(+)(in) = a quinol + NAD(+) + 4 H(+)(out). In terms of biological role, NDH-1 shuttles electrons from NADH, via FMN and iron-sulfur (Fe-S) centers, to quinones in the respiratory chain. The immediate electron acceptor for the enzyme in this species is believed to be ubiquinone. Couples the redox reaction to proton translocation (for every two electrons transferred, four hydrogen ions are translocated across the cytoplasmic membrane), and thus conserves the redox energy in a proton gradient. The polypeptide is NADH-quinone oxidoreductase subunit C/D (Escherichia coli O127:H6 (strain E2348/69 / EPEC)).